Reading from the N-terminus, the 871-residue chain is uncharacterized protein (871 aa).

11 helical membrane passes run 11-31 (AFVS…GLFL), 92-112 (YLFT…PILL), 139-159 (FYAH…IIYR), 380-400 (TILT…GCIS), 422-442 (LLGI…MSLV), 475-495 (VQVF…VQVI), 520-540 (FLLQ…TLLL), 562-582 (LSAP…TIMI), 586-606 (IIAP…YFAY), 629-649 (LFQV…LFVL), and 653-673 (WGAT…HLYF). Residues S725, S726, S727, S729, S737, and S761 each carry the phosphoserine modification. A compositionally biased stretch (polar residues) spans 727–740 (SGSDEFLETSSRTS). A disordered region spans residues 727 to 746 (SGSDEFLETSSRTSENTKEK).

Belongs to the CSC1 (TC 1.A.17) family.

Its subcellular location is the golgi apparatus membrane. In terms of biological role, acts as an osmosensitive calcium-permeable cation channel. This is an uncharacterized protein from Schizosaccharomyces pombe (strain 972 / ATCC 24843) (Fission yeast).